The chain runs to 253 residues: Ribonuclease HII (253 aa).

Positions 32 to 223 (APVAGLDEAG…FKTSGEEDRI (192 aa)) constitute an RNase H type-2 domain. A divalent metal cation-binding residues include D38, E39, and D130.

Belongs to the RNase HII family. It depends on Mn(2+) as a cofactor. The cofactor is Mg(2+).

The protein localises to the cytoplasm. It catalyses the reaction Endonucleolytic cleavage to 5'-phosphomonoester.. Functionally, endonuclease that specifically degrades the RNA of RNA-DNA hybrids. The sequence is that of Ribonuclease HII from Chelativorans sp. (strain BNC1).